Reading from the N-terminus, the 631-residue chain is DNA mismatch repair protein MutL (631 aa).

The protein belongs to the DNA mismatch repair MutL/HexB family.

Its function is as follows. This protein is involved in the repair of mismatches in DNA. It is required for dam-dependent methyl-directed DNA mismatch repair. May act as a 'molecular matchmaker', a protein that promotes the formation of a stable complex between two or more DNA-binding proteins in an ATP-dependent manner without itself being part of a final effector complex. In Mannheimia succiniciproducens (strain KCTC 0769BP / MBEL55E), this protein is DNA mismatch repair protein MutL.